The following is a 436-amino-acid chain: MTVTSDFTQKLYENFAENTKLRAVENAVTKNGLLSSLEVRGSHAANLPEFSLDLTKDPVTNQKQSGRCWMFAALNTFRHKFINEFKTEDFEFSQAYTFFWDKYEKSNWFMEQIIGDVAMDDRRLKFLLQTPQQDGGQWDMMVAIFDKYGIVPKAVYPESQASSSSRELNQYLNKLLRQDAEILRYTIEQDGDVQAVKEELLQEVFNFLAVTLGLPPQNFEFAFRNKDNEYKKFVGTPKEFYNEYVGIDLNNYVSVINAPTADKPYNKSYTVEFLGNVVGGKEVKHLNVEMDRFKKLAIAQMQAGETVWFGCDVGQESNRSAGLLTMDSYDFKSSLDIEFTQSKAGRLDYGESLMTHAMVLAGVDLDADGNSTKWKVENSWGKDAGQKGYFVASDEWMDEYTYQIVVRKDLLSEEELAAYEAKPQVLLPWDPMGALA.

Catalysis depends on residues Cys-68, His-356, and Asn-378.

The protein belongs to the peptidase C1 family. In terms of assembly, homohexamer.

It carries out the reaction Inactivates bleomycin B2 (a cytotoxic glycometallopeptide) by hydrolysis of a carboxyamide bond of beta-aminoalanine, but also shows general aminopeptidase activity. The specificity varies somewhat with source, but amino acid arylamides of Met, Leu and Ala are preferred.. In terms of biological role, hydrolyzes naphthylamide-substituted amino acids as well as di- and tripeptides in which the half-cystine residue is involved in a disulfide loop, notably in oxytocin and vasopressin. Also has a bleomycin hydrolase activity. In Lactococcus lactis subsp. cremoris (Streptococcus cremoris), this protein is Aminopeptidase C (pepC).